A 203-amino-acid chain; its full sequence is Probable chemoreceptor glutamine deamidase CheD (203 aa).

It belongs to the CheD family.

The enzyme catalyses L-glutaminyl-[protein] + H2O = L-glutamyl-[protein] + NH4(+). Probably deamidates glutamine residues to glutamate on methyl-accepting chemotaxis receptors (MCPs), playing an important role in chemotaxis. This is Probable chemoreceptor glutamine deamidase CheD from Herminiimonas arsenicoxydans.